Reading from the N-terminus, the 117-residue chain is MPRVKRGVQARARHKKVLKQAKGYYGARSRVYRVAFQAVTKAGQYAYRDRRQKKRTFRALWIARINAAARQNGLSYSRLINGLKKASIEIDRKILADIAVFDKATFTVLVEKAKAAL.

Belongs to the bacterial ribosomal protein bL20 family.

Functionally, binds directly to 23S ribosomal RNA and is necessary for the in vitro assembly process of the 50S ribosomal subunit. It is not involved in the protein synthesizing functions of that subunit. In Photobacterium profundum (strain SS9), this protein is Large ribosomal subunit protein bL20.